A 333-amino-acid chain; its full sequence is Biotin synthase (333 aa).

In terms of domain architecture, Radical SAM core spans 47–276 (ADIQRASLLS…KARVRLSAGR (230 aa)). [4Fe-4S] cluster is bound by residues Cys-62, Cys-66, and Cys-69. [2Fe-2S] cluster-binding residues include Cys-107, Cys-139, Cys-199, and Arg-271.

Belongs to the radical SAM superfamily. Biotin synthase family. As to quaternary structure, homodimer. It depends on [4Fe-4S] cluster as a cofactor. [2Fe-2S] cluster serves as cofactor.

It catalyses the reaction (4R,5S)-dethiobiotin + (sulfur carrier)-SH + 2 reduced [2Fe-2S]-[ferredoxin] + 2 S-adenosyl-L-methionine = (sulfur carrier)-H + biotin + 2 5'-deoxyadenosine + 2 L-methionine + 2 oxidized [2Fe-2S]-[ferredoxin]. Its pathway is cofactor biosynthesis; biotin biosynthesis; biotin from 7,8-diaminononanoate: step 2/2. Its function is as follows. Catalyzes the conversion of dethiobiotin (DTB) to biotin by the insertion of a sulfur atom into dethiobiotin via a radical-based mechanism. The sequence is that of Biotin synthase from Methylobacterium nodulans (strain LMG 21967 / CNCM I-2342 / ORS 2060).